We begin with the raw amino-acid sequence, 238 residues long: Ras association domain-containing protein 3 (238 aa).

An N-acetylserine modification is found at serine 2. A disordered region spans residues 26-48 (RAPQGKPRSGQQDVEKEKETHSY). Basic and acidic residues predominate over residues 38–48 (DVEKEKETHSY). In terms of domain architecture, Ras-associating spans 79–186 (YTGFIKVQME…TLSFVLREHE (108 aa)). The SARAH domain maps to 187-234 (IGEWEAFSLPELQNFLRILDKEEDEQLQNLKRRYTAYRQKLEEALREV).

In terms of tissue distribution, widely expressed.

It is found in the cytoplasm. The protein resides in the cytoskeleton. The sequence is that of Ras association domain-containing protein 3 (RASSF3) from Homo sapiens (Human).